We begin with the raw amino-acid sequence, 306 residues long: Ribosomal protein L11 methyltransferase (306 aa).

S-adenosyl-L-methionine contacts are provided by threonine 154, glycine 179, aspartate 201, and asparagine 242.

Belongs to the methyltransferase superfamily. PrmA family.

The protein localises to the cytoplasm. It carries out the reaction L-lysyl-[protein] + 3 S-adenosyl-L-methionine = N(6),N(6),N(6)-trimethyl-L-lysyl-[protein] + 3 S-adenosyl-L-homocysteine + 3 H(+). Functionally, methylates ribosomal protein L11. In Xylella fastidiosa (strain Temecula1 / ATCC 700964), this protein is Ribosomal protein L11 methyltransferase.